The sequence spans 141 residues: Large ribosomal subunit protein uL16 (141 aa).

This sequence belongs to the universal ribosomal protein uL16 family. Part of the 50S ribosomal subunit.

Its function is as follows. Binds 23S rRNA and is also seen to make contacts with the A and possibly P site tRNAs. The chain is Large ribosomal subunit protein uL16 from Campylobacter jejuni subsp. jejuni serotype O:6 (strain 81116 / NCTC 11828).